A 628-amino-acid polypeptide reads, in one-letter code: Chaperone protein DnaK (628 aa).

A Phosphothreonine; by autocatalysis modification is found at threonine 195. The tract at residues 545-628 (QLEENEGAAQ…VIDADFKAAE (84 aa)) is disordered. The span at 555–591 (DAKDALKAAADEAEEAVRSEDDARIESAQKRLEEELR) shows a compositional bias: basic and acidic residues. Over residues 596 to 612 (AQQAAGQGQPQGAQAQG) the composition is skewed to low complexity. A compositionally biased stretch (basic and acidic residues) spans 614–628 (KADDDVIDADFKAAE).

This sequence belongs to the heat shock protein 70 family.

In terms of biological role, acts as a chaperone. The chain is Chaperone protein DnaK from Deinococcus deserti (strain DSM 17065 / CIP 109153 / LMG 22923 / VCD115).